A 239-amino-acid polypeptide reads, in one-letter code: Increased recombination centers protein 22-2 (239 aa).

The first 19 residues, 1–19, serve as a signal peptide directing secretion; sequence MKLSTIFTAFAATIATVAG. Over 20–161 the chain is Lumenal; the sequence is YETTGSKQTV…AAVSFFDPRL (142 aa). Residues 162–182 form a helical membrane-spanning segment; sequence IFLELVLLITFAGLIYVGYEI. Residues 183 to 239 lie on the Cytoplasmic side of the membrane; the sequence is WGKQYFKGVAPVKAKKVSAAKASSPVATGPSTTSATGYDTNWIPESHLKQKKTKKVN. Residues 202–222 form a disordered region; sequence AKASSPVATGPSTTSATGYDT. Residues 211–221 show a composition bias toward polar residues; the sequence is GPSTTSATGYD.

The protein belongs to the IRC22 family.

It is found in the endoplasmic reticulum membrane. In terms of biological role, is probably involved in a pathway contributing to genomic integrity. In Candida albicans (strain SC5314 / ATCC MYA-2876) (Yeast), this protein is Increased recombination centers protein 22-2 (IRC22-2).